The following is a 179-amino-acid chain: uncharacterized protein (179 aa).

This is an uncharacterized protein from Galliformes (FAdV-1).